The following is a 901-amino-acid chain: HTH-type transcriptional regulator MalT (901 aa).

Residue 39 to 46 (SPAGYGKT) participates in ATP binding. Residues 829-894 (ELIRTSPLTQ…DAVQHAQQLL (66 aa)) enclose the HTH luxR-type domain. A DNA-binding region (H-T-H motif) is located at residues 853–872 (NEQIAGELAVAATTIKTHIR).

It belongs to the MalT family. In terms of assembly, monomer in solution. Oligomerizes to an active state in the presence of the positive effectors ATP and maltotriose.

With respect to regulation, activated by ATP and maltotriose, which are both required for DNA binding. Functionally, positively regulates the transcription of the maltose regulon whose gene products are responsible for uptake and catabolism of malto-oligosaccharides. Specifically binds to the promoter region of its target genes, recognizing a short DNA motif called the MalT box. The polypeptide is HTH-type transcriptional regulator MalT (Salmonella typhimurium (strain LT2 / SGSC1412 / ATCC 700720)).